The primary structure comprises 399 residues: Probable peptidoglycan glycosyltransferase FtsW (399 aa).

9 consecutive transmembrane segments (helical) span residues 33 to 53 (LVWLTLGLFSVGLIMVISTSI), 71 to 91 (IFYFFLIFLLSFIFLRTPIIF), 98 to 118 (IILIISIVLLVLVLLIGHSIH), 160 to 180 (FWGFFKPMSVIITQSMLLLAE), 182 to 202 (DLGTVVVLFFTTISVLFLSGA), 204 to 224 (IGQFFIIITVSILTIILLILL), 287 to 307 (IIGEELGYIGSFLILLIIFTI), 324 to 344 (IFSGFLACSIGIWLSFQTSIN), and 359 to 379 (LPFISYGGSSLIINSIAIFFL).

This sequence belongs to the SEDS family. FtsW subfamily.

The protein resides in the cell inner membrane. It carries out the reaction [GlcNAc-(1-&gt;4)-Mur2Ac(oyl-L-Ala-gamma-D-Glu-L-Lys-D-Ala-D-Ala)](n)-di-trans,octa-cis-undecaprenyl diphosphate + beta-D-GlcNAc-(1-&gt;4)-Mur2Ac(oyl-L-Ala-gamma-D-Glu-L-Lys-D-Ala-D-Ala)-di-trans,octa-cis-undecaprenyl diphosphate = [GlcNAc-(1-&gt;4)-Mur2Ac(oyl-L-Ala-gamma-D-Glu-L-Lys-D-Ala-D-Ala)](n+1)-di-trans,octa-cis-undecaprenyl diphosphate + di-trans,octa-cis-undecaprenyl diphosphate + H(+). It functions in the pathway cell wall biogenesis; peptidoglycan biosynthesis. Its function is as follows. Peptidoglycan polymerase that is essential for cell division. The sequence is that of Probable peptidoglycan glycosyltransferase FtsW from Buchnera aphidicola subsp. Acyrthosiphon pisum (strain APS) (Acyrthosiphon pisum symbiotic bacterium).